The primary structure comprises 245 residues: Mannose/glucose-specific lectin (245 aa).

Residues D87 and G107 each coordinate a carbohydrate. N119 carries an N-linked (GlcNAc...) asparagine glycan. The Mn(2+) site is built by E129 and D131. Ca(2+) contacts are provided by D131 and F133. Positions 138 and 139 each coordinate a carbohydrate. 2 residues coordinate Ca(2+): N139 and D142. D142 and H147 together coordinate Mn(2+). A carbohydrate-binding residues include G221, E222, and Q223.

The protein belongs to the leguminous lectin family. As to quaternary structure, homodimer.

Functionally, mannose/glucose-specific lectin that also binds derivatives N-acetyl-D-glucosamine and alpha-methyl-D-mannopyranoside with even higher affinity. Has hemagglutinating activity towards rabbit erythrocytes. Is toxic towards brine shrimp A.nauplii. In rats, induces dose-dependent paw edema. The polypeptide is Mannose/glucose-specific lectin (Centrolobium tomentosum (Arariba)).